The following is a 574-amino-acid chain: E3 ubiquitin-protein ligase NEURL1 (574 aa).

A compositionally biased stretch (polar residues) spans 1–18 (MGNNFSSVSSLQRGNPSR). Positions 1–53 (MGNNFSSVSSLQRGNPSRASRGHPQNLKDSIGGSFPVPSHRCHHKQKHCPPTL) are disordered. The N-myristoyl glycine moiety is linked to residue Gly2. 2 consecutive NHR domains span residues 61–217 (TPLL…QLLD) and 292–447 (GDLR…RILG). The RING-type zinc-finger motif lies at 520–560 (ECTICYEHAVDTVIYTCGHMCLCYSCGLRLKKALHACCPIC).

In terms of assembly, interacts with CPEB3 (via N-terminal domain); the interaction increases CPEB3 ubiquitination. Interacts with DLL1. Post-translationally, myristoylation is a determinant of membrane targeting. Expressed in CA1 pyramidal neurons (at protein level). Expressed throughout the adult forebrain, including the cerebral cortex, amygdala, striatum, and CA1 area of the hippocampus. Expressed in sensory neurons of the olfactory epithelium, the vomeronasal organ, mammary gland and skeletal muscle.

The protein localises to the cytoplasm. Its subcellular location is the perinuclear region. It is found in the cell membrane. The protein resides in the perikaryon. It localises to the cell projection. The protein localises to the dendrite. Its subcellular location is the postsynaptic density. It carries out the reaction S-ubiquitinyl-[E2 ubiquitin-conjugating enzyme]-L-cysteine + [acceptor protein]-L-lysine = [E2 ubiquitin-conjugating enzyme]-L-cysteine + N(6)-ubiquitinyl-[acceptor protein]-L-lysine.. It participates in protein modification; protein ubiquitination. Functionally, plays a role in hippocampal-dependent synaptic plasticity, learning and memory. Involved in the formation of spines and functional synaptic contacts by modulating the translational activity of the cytoplasmic polyadenylation element-binding protein CPEB3. Promotes ubiquitination of CPEB3, and hence induces CPEB3-dependent mRNA translation activation of glutamate receptor GRIA1 and GRIA2. Can function as an E3 ubiquitin-protein ligase to activate monoubiquitination of JAG1 (in vitro), thereby regulating the Notch pathway. Acts as a tumor suppressor; inhibits malignant cell transformation of medulloblastoma (MB) cells by inhibiting the Notch signaling pathway. This Mus musculus (Mouse) protein is E3 ubiquitin-protein ligase NEURL1 (Neurl1).